Reading from the N-terminus, the 62-residue chain is E3 SUMO-protein ligase EGR2 (62 aa).

C2H2-type zinc fingers lie at residues 1-21 (AEGCDRRFSASDELTRHIRIH), 27-49 (FQCAICMRNFSRSDHLTTHIRTH), and 55-62 (FACDYCGR).

Belongs to the EGR C2H2-type zinc-finger protein family. Interacts with HCFC1. Interacts with WWP2. Interacts with UBC9. Interacts with CITED1. Interacts (via phosphorylated form) with SFN. Post-translationally, ubiquitinated by WWP2 leading to proteasomal degradation. In terms of processing, acetylated. May be deacetylated by HDAC6, HDAC10 or SIRT1.

The protein localises to the nucleus. It participates in protein modification; protein sumoylation. Its function is as follows. Sequence-specific DNA-binding transcription factor. Plays a role in hindbrain segmentation by regulating the expression of a subset of homeobox containing genes and in Schwann cell myelination by regulating the expression of genes involved in the formation and maintenance of myelin. Binds to two EGR2-consensus sites EGR2A (5'-CTGTAGGAG-3') and EGR2B (5'-ATGTAGGTG-3') in the HOXB3 enhancer and promotes HOXB3 transcriptional activation. Binds to specific DNA sites located in the promoter region of HOXA4, HOXB2 and ERBB2. Regulates hindbrain segmentation by controlling the expression of Hox genes, such as HOXA4, HOXB3 and HOXB2, and thereby specifying odd and even rhombomeres. Promotes the expression of HOXB3 in the rhombomere r5 in the hindbrain. Regulates myelination in the peripheral nervous system after birth, possibly by regulating the expression of myelin proteins, such as MPZ, and by promoting the differentiation of Schwann cells. Involved in the development of the jaw openener musculature, probably by playing a role in its innervation through trigeminal motor neurons. May play a role in adipogenesis, possibly by regulating the expression of CEBPB. In terms of biological role, E3 SUMO-protein ligase helping SUMO1 conjugation to its coregulators NAB1 and NAB2, whose sumoylation down-regulates EGR2 transcriptional activity. The protein is E3 SUMO-protein ligase EGR2 (EGR2) of Cerdocyon thous (Crab-eating fox).